The primary structure comprises 633 residues: uncharacterized protein (633 aa).

The disordered stretch occupies residues 12–43; it reads ESGTNNYSDTIANGNTLPPRSKKGHSGRRKRS. Residues 13-29 are compositionally biased toward polar residues; the sequence is SGTNNYSDTIANGNTLP. Basic residues predominate over residues 31-42; it reads RSKKGHSGRRKR. The next 2 membrane-spanning stretches (helical) occupy residues 99 to 118 and 217 to 233; these read ILFG…SSAL and NCAF…ITAC. A disordered region spans residues 593 to 612; sequence DAETNKATGSAKSENIETKS.

The protein resides in the membrane. This is an uncharacterized protein from Saccharomyces cerevisiae (strain ATCC 204508 / S288c) (Baker's yeast).